The primary structure comprises 180 residues: UPF0227 protein YcfP (180 aa).

It belongs to the UPF0227 family.

This Escherichia coli O9:H4 (strain HS) protein is UPF0227 protein YcfP.